Consider the following 211-residue polypeptide: MTIGVVGRKAGMTRIFTEEGVSIPVTVIEIEPNRVTQFKTEETDGYRAVQVTVGERRASRVTAAQAGHFAKANVAAGRGVWEFRLEEGDFQAGDLIKAELFTAGQLVDVTGQSKGKGFAGTIKRWNFRGQDNTHGNSVSHRVPGSIGQCQTPGRVFKGKKMSGHMGAERVTVQSLEVVRVDAERNLLLIKGAVPGATGGDVVVRPAVKARG.

An N5-methylglutamine modification is found at glutamine 150.

Belongs to the universal ribosomal protein uL3 family. In terms of assembly, part of the 50S ribosomal subunit. Forms a cluster with proteins L14 and L19. Post-translationally, methylated by PrmB.

Functionally, one of the primary rRNA binding proteins, it binds directly near the 3'-end of the 23S rRNA, where it nucleates assembly of the 50S subunit. The polypeptide is Large ribosomal subunit protein uL3 (Pseudomonas entomophila (strain L48)).